Here is a 269-residue protein sequence, read N- to C-terminus: Tryptophan synthase alpha chain (269 aa).

Residues glutamate 50 and aspartate 61 each act as proton acceptor in the active site.

This sequence belongs to the TrpA family. As to quaternary structure, tetramer of two alpha and two beta chains.

It catalyses the reaction (1S,2R)-1-C-(indol-3-yl)glycerol 3-phosphate + L-serine = D-glyceraldehyde 3-phosphate + L-tryptophan + H2O. Its pathway is amino-acid biosynthesis; L-tryptophan biosynthesis; L-tryptophan from chorismate: step 5/5. Its function is as follows. The alpha subunit is responsible for the aldol cleavage of indoleglycerol phosphate to indole and glyceraldehyde 3-phosphate. This chain is Tryptophan synthase alpha chain, found in Francisella tularensis subsp. tularensis (strain FSC 198).